A 372-amino-acid polypeptide reads, in one-letter code: D-alanine--D-alanine ligase (372 aa).

An ATP-grasp domain is found at 145–349 (KTVLRAGGIP…CPNLLDQLIE (205 aa)). An ATP-binding site is contributed by 176 to 231 (DRWGTSELFVKAVSLGSSVATLPVKTETEFTKAVKEVFRYDDRLMVEPRIRGREIE). Positions 303, 316, and 318 each coordinate Mg(2+).

This sequence belongs to the D-alanine--D-alanine ligase family. Requires Mg(2+) as cofactor. Mn(2+) serves as cofactor.

It is found in the cytoplasm. It carries out the reaction 2 D-alanine + ATP = D-alanyl-D-alanine + ADP + phosphate + H(+). Its pathway is cell wall biogenesis; peptidoglycan biosynthesis. Cell wall formation. This is D-alanine--D-alanine ligase from Coxiella burnetii (strain Dugway 5J108-111).